A 481-amino-acid chain; its full sequence is tRNA pseudouridine(38/39) synthase (481 aa).

At A2 the chain carries N-acetylalanine. Residues 29 to 40 show a composition bias toward basic and acidic residues; that stretch reads KKEQANNKDSNI. Residues 29–54 form a disordered region; sequence KKEQANNKDSNIRENSSGAGGKPKRA. D118 acts as the Nucleophile in catalysis. Y195 contacts substrate. T456 carries the phosphothreonine modification.

The protein belongs to the tRNA pseudouridine synthase TruA family.

The protein resides in the nucleus. The enzyme catalyses uridine(38/39) in tRNA = pseudouridine(38/39) in tRNA. Its function is as follows. Formation of pseudouridine at position 39 in the anticodon stem and loop of transfer RNAs. The chain is tRNA pseudouridine(38/39) synthase (PUS3) from Bos taurus (Bovine).